A 197-amino-acid polypeptide reads, in one-letter code: Large ribosomal subunit protein mL58 (197 aa).

Residues 1–20 constitute a mitochondrion transit peptide; sequence MLFTIKPSFLKPVGFIQTRN.

Belongs to the mitochondrion-specific ribosomal protein mL58 family. In terms of assembly, component of the mitochondrial large ribosomal subunit (mt-LSU). Mature yeast 74S mitochondrial ribosomes consist of a small (37S) and a large (54S) subunit. The 37S small subunit contains a 15S ribosomal RNA (15S mt-rRNA) and at least 32 different proteins. The 54S large subunit contains a 21S rRNA (21S mt-rRNA) and at least 45 different proteins.

It localises to the mitochondrion. Its function is as follows. Component of the mitochondrial ribosome (mitoribosome), a dedicated translation machinery responsible for the synthesis of mitochondrial genome-encoded proteins, including at least some of the essential transmembrane subunits of the mitochondrial respiratory chain. The mitoribosomes are attached to the mitochondrial inner membrane and translation products are cotranslationally integrated into the membrane. The sequence is that of Large ribosomal subunit protein mL58 (mrpl20) from Schizosaccharomyces pombe (strain 972 / ATCC 24843) (Fission yeast).